The following is a 524-amino-acid chain: Phosphoenolpyruvate carboxykinase (ATP) (524 aa).

Arg-52, Tyr-188, and Lys-194 together coordinate substrate. ATP contacts are provided by residues Lys-194, His-213, and 229-237 (GLSGTGKTT). Residues Lys-194 and His-213 each coordinate Mn(2+). Asp-250 contacts Mn(2+). ATP contacts are provided by Glu-278, Arg-314, and Thr-439. Position 314 (Arg-314) interacts with substrate.

The protein belongs to the phosphoenolpyruvate carboxykinase (ATP) family. Mn(2+) is required as a cofactor.

It localises to the cytoplasm. It carries out the reaction oxaloacetate + ATP = phosphoenolpyruvate + ADP + CO2. Its pathway is carbohydrate biosynthesis; gluconeogenesis. In terms of biological role, involved in the gluconeogenesis. Catalyzes the conversion of oxaloacetate (OAA) to phosphoenolpyruvate (PEP) through direct phosphoryl transfer between the nucleoside triphosphate and OAA. This Campylobacter jejuni subsp. jejuni serotype O:23/36 (strain 81-176) protein is Phosphoenolpyruvate carboxykinase (ATP).